The primary structure comprises 438 residues: Adenosylhomocysteinase (438 aa).

Substrate is bound by residues threonine 61, aspartate 137, and glutamate 162. Position 163 to 165 (threonine 163 to threonine 165) interacts with NAD(+). Residues lysine 192 and aspartate 196 each contribute to the substrate site. NAD(+) contacts are provided by residues asparagine 197, glycine 226–glycine 231, glutamate 249, asparagine 284, isoleucine 305–histidine 307, and asparagine 352.

This sequence belongs to the adenosylhomocysteinase family. NAD(+) serves as cofactor.

The protein localises to the cytoplasm. It catalyses the reaction S-adenosyl-L-homocysteine + H2O = L-homocysteine + adenosine. It functions in the pathway amino-acid biosynthesis; L-homocysteine biosynthesis; L-homocysteine from S-adenosyl-L-homocysteine: step 1/1. Its function is as follows. May play a key role in the regulation of the intracellular concentration of adenosylhomocysteine. The sequence is that of Adenosylhomocysteinase from Christiangramia forsetii (strain DSM 17595 / CGMCC 1.15422 / KT0803) (Gramella forsetii).